Consider the following 1368-residue polypeptide: DNA-directed RNA polymerase subunit beta (1368 aa).

Belongs to the RNA polymerase beta chain family. As to quaternary structure, the RNAP catalytic core consists of 2 alpha, 1 beta, 1 beta' and 1 omega subunit. When a sigma factor is associated with the core the holoenzyme is formed, which can initiate transcription.

The catalysed reaction is RNA(n) + a ribonucleoside 5'-triphosphate = RNA(n+1) + diphosphate. DNA-dependent RNA polymerase catalyzes the transcription of DNA into RNA using the four ribonucleoside triphosphates as substrates. The polypeptide is DNA-directed RNA polymerase subunit beta (Burkholderia mallei (strain SAVP1)).